A 157-amino-acid chain; its full sequence is SsrA-binding protein (157 aa).

It belongs to the SmpB family.

The protein localises to the cytoplasm. Functionally, required for rescue of stalled ribosomes mediated by trans-translation. Binds to transfer-messenger RNA (tmRNA), required for stable association of tmRNA with ribosomes. tmRNA and SmpB together mimic tRNA shape, replacing the anticodon stem-loop with SmpB. tmRNA is encoded by the ssrA gene; the 2 termini fold to resemble tRNA(Ala) and it encodes a 'tag peptide', a short internal open reading frame. During trans-translation Ala-aminoacylated tmRNA acts like a tRNA, entering the A-site of stalled ribosomes, displacing the stalled mRNA. The ribosome then switches to translate the ORF on the tmRNA; the nascent peptide is terminated with the 'tag peptide' encoded by the tmRNA and targeted for degradation. The ribosome is freed to recommence translation, which seems to be the essential function of trans-translation. The protein is SsrA-binding protein of Rhodococcus jostii (strain RHA1).